A 348-amino-acid polypeptide reads, in one-letter code: S-adenosylmethionine:tRNA ribosyltransferase-isomerase (348 aa).

Belongs to the QueA family. As to quaternary structure, monomer.

Its subcellular location is the cytoplasm. The catalysed reaction is 7-aminomethyl-7-carbaguanosine(34) in tRNA + S-adenosyl-L-methionine = epoxyqueuosine(34) in tRNA + adenine + L-methionine + 2 H(+). The protein operates within tRNA modification; tRNA-queuosine biosynthesis. In terms of biological role, transfers and isomerizes the ribose moiety from AdoMet to the 7-aminomethyl group of 7-deazaguanine (preQ1-tRNA) to give epoxyqueuosine (oQ-tRNA). This is S-adenosylmethionine:tRNA ribosyltransferase-isomerase from Cytophaga hutchinsonii (strain ATCC 33406 / DSM 1761 / CIP 103989 / NBRC 15051 / NCIMB 9469 / D465).